The primary structure comprises 308 residues: D-alanine--D-alanine ligase (308 aa).

An ATP-grasp domain is found at 103–302 (KFVFRAAGLP…YGELVSWMVE (200 aa)). Residue 130 to 184 (MDPPYVIKPVSEGSSVGVFIVRAGDNRPPAELTSAEWNLGDEVMAERYIAGRELT) coordinates ATP. The Mg(2+) site is built by Asp252, Glu269, and Asn271.

This sequence belongs to the D-alanine--D-alanine ligase family. Mg(2+) is required as a cofactor. Requires Mn(2+) as cofactor.

The protein resides in the cytoplasm. It catalyses the reaction 2 D-alanine + ATP = D-alanyl-D-alanine + ADP + phosphate + H(+). It functions in the pathway cell wall biogenesis; peptidoglycan biosynthesis. Its function is as follows. Cell wall formation. The chain is D-alanine--D-alanine ligase from Parvibaculum lavamentivorans (strain DS-1 / DSM 13023 / NCIMB 13966).